The primary structure comprises 70 residues: UPF0426 protein ssl0294 (70 aa).

Belongs to the UPF0426 family.

The polypeptide is UPF0426 protein ssl0294 (Synechocystis sp. (strain ATCC 27184 / PCC 6803 / Kazusa)).